Here is a 944-residue protein sequence, read N- to C-terminus: Tyrosine-protein kinase transmembrane receptor ROR2 (944 aa).

Positions 1–33 are cleaved as a signal peptide; that stretch reads MARGWVRPSRVPLCARAVWTAAALLLWTPWTAG. Over 34 to 403 the chain is Extracellular; it reads EVEDSEAIDT…CSPRDGSKMG (370 aa). One can recognise an Ig-like C2-type domain in the interval 55-145; it reads PTLKGYFLNF…VATNGLKTIT (91 aa). Asparagine 70 is a glycosylation site (N-linked (GlcNAc...) asparagine). Intrachain disulfides connect cysteine 83/cysteine 135, cysteine 174/cysteine 239, cysteine 182/cysteine 232, cysteine 223/cysteine 264, cysteine 252/cysteine 300, cysteine 256/cysteine 286, cysteine 316/cysteine 394, cysteine 337/cysteine 377, and cysteine 365/cysteine 389. One can recognise an FZ domain in the interval 169–303; that stretch reads QEDGFCQPYR…SPDAANCMRI (135 aa). Asparagine 188 carries N-linked (GlcNAc...) asparagine glycosylation. The region spanning 316–394 is the Kringle domain; sequence CYNGSGADYR…RVELCDVPPC (79 aa). Asparagine 318 carries an N-linked (GlcNAc...) asparagine glycan. The chain crosses the membrane as a helical span at residues 404 to 424; it reads ILYILVPSIAIPLVIACLFFL. At 425-944 the chain is on the cytoplasmic side; sequence VCMCRNKQKA…TEAAHVQLEA (520 aa). In terms of domain architecture, Protein kinase spans 473-746; that stretch reads VRFMEELGED…PRFKDIHSRL (274 aa). Residues 479 to 487 and lysine 507 contribute to the ATP site; that span reads LGEDRFGKV. The active-site Proton acceptor is aspartate 615. Position 646 is a phosphotyrosine; by autocatalysis (tyrosine 646). A disordered region spans residues 757-779; the sequence is SSAQTSGASNTTQTSSLSTSPVS. Positions 765 to 779 are enriched in low complexity; sequence SNTTQTSSLSTSPVS. Arginine 785 is subject to Asymmetric dimethylarginine. Disordered regions lie at residues 850-879 and 898-929; these read QVPPQMVPKPSSHHSGSGSTSTGYVTTAPS and QNIAEDVAQSPVQEAEEEEEGSVPETELLGDN. The span at 857–872 shows a compositional bias: low complexity; sequence PKPSSHHSGSGSTSTG.

Belongs to the protein kinase superfamily. Tyr protein kinase family. ROR subfamily. As to quaternary structure, homodimer; promotes osteogenesis. Binds YWHAB. Interacts with WTIP. Interacts with ROR2. Mg(2+) is required as a cofactor.

The protein localises to the cell membrane. It catalyses the reaction L-tyrosyl-[protein] + ATP = O-phospho-L-tyrosyl-[protein] + ADP + H(+). Tyrosine-protein kinase receptor which may be involved in the early formation of the chondrocytes. It seems to be required for cartilage and growth plate development. Phosphorylates YWHAB, leading to induction of osteogenesis and bone formation. In contrast, has also been shown to have very little tyrosine kinase activity in vitro. May act as a receptor for wnt ligand WNT5A which may result in the inhibition of WNT3A-mediated signaling. In Mus musculus (Mouse), this protein is Tyrosine-protein kinase transmembrane receptor ROR2 (Ror2).